We begin with the raw amino-acid sequence, 486 residues long: Elastin-binding protein EbpS (486 aa).

Over residues 1 to 40 (MSNNFKDDFEKNRQSIDTNSHQDHTEDVEKDQSELEHQDT) the composition is skewed to basic and acidic residues. Residues 1-314 (MSNNFKDDFE…NHDRDKERKK (314 aa)) are disordered. The Extracellular portion of the chain corresponds to 2 to 204 (SNNFKDDFEK…ESKDHHSGKK (203 aa)). The interval 14 to 34 (QSIDTNSHQDHTEDVEKDQSE) is elastin-binding. A compositionally biased stretch (polar residues) spans 64 to 85 (TNHNKQVHNESQTSEDNVQNEA). Composition is skewed to basic and acidic residues over residues 103–118 (EPSH…EEYY), 126–160 (DKSH…KSEA), and 180–199 (SKDK…SKDH). 2 stretches are compositionally biased toward low complexity: residues 204-225 (KGAA…MGVS) and 233-246 (DAQN…SNNS). Residues 205-225 (GAAIGAGTAGVAGAAGAMGVS) form a helical membrane-spanning segment. The Cytoplasmic portion of the chain corresponds to 226–319 (KAKKHSNDAQ…KERKKGGMAK (94 aa)). Over residues 247 to 259 (TEDKVSQDKSKDH) the composition is skewed to basic and acidic residues. The segment covering 278-297 (GAASKSASAASKPHASNNAS) has biased composition (low complexity). Positions 299–314 (NHDEHDNHDRDKERKK) are enriched in basic and acidic residues. A helical membrane pass occupies residues 320–340 (VLLPLIAAVLIIGALAIFGGM). Residues 341–486 (ALNNHNNGTK…IRNGQQIVIP (146 aa)) are Extracellular-facing. The segment at 351 to 440 (ENKIANTNKN…QRQGGGQRHT (90 aa)) is disordered. Basic and acidic residues predominate over residues 361–398 (NADESKDKDTSKDASKDKSKSTDSDKSKEDQDKATKDE). Residues 403 to 431 (QNNANQANNQAQNNQNQQQANQNQQQQQQ) show a composition bias toward low complexity. The LysM domain occupies 437-485 (QRHTVNGQENLYRIAIQYYGSGSPENVEKIRRANGLSGNNIRNGQQIVI).

It is found in the cell membrane. Promotes binding of soluble elastin peptides and tropoelastin to S.aureus cells although it is not able to promote bacterial adherence to immobilized elastin and, therefore, is not a microbial surface component recognizing adhesive matrix molecule (MSCRAMM). This Staphylococcus aureus (strain MSSA476) protein is Elastin-binding protein EbpS (ebpS).